The chain runs to 333 residues: Ribosomal protein L11 methyltransferase (333 aa).

S-adenosyl-L-methionine contacts are provided by T160, G181, D203, and N267.

This sequence belongs to the methyltransferase superfamily. PrmA family.

It is found in the cytoplasm. It catalyses the reaction L-lysyl-[protein] + 3 S-adenosyl-L-methionine = N(6),N(6),N(6)-trimethyl-L-lysyl-[protein] + 3 S-adenosyl-L-homocysteine + 3 H(+). Its function is as follows. Methylates ribosomal protein L11. The protein is Ribosomal protein L11 methyltransferase of Lachnoclostridium phytofermentans (strain ATCC 700394 / DSM 18823 / ISDg) (Clostridium phytofermentans).